Consider the following 341-residue polypeptide: MLLGMSLEELTTVALRMGMPRFAGKQLAEWIYVRRATDFAEMTNISQANRQKLAEIYDLGRYPWSDVQCSVDGTKKYLFPVGEGRFVESVLIPEGDRATLCISSQVGCKMDCLFCMTGKQGWNGNLSAAEILNQIFSVDEAAELTNLVYMGMGEPLDNTDEVLRSIEALTEPWGMGWSPKRITVSTIGAKGLERFLAESRCHLAVSLHSPFPEERRKLMPGEKAFPIMQTLDRIRAYDFSGQRRVSFEYIVFDGLNDDMRHADELAAILRGIPCRINLIRFHKIPAVSLRSSDTARMEAFRKRMESHGFTCTIRASRGEDIFAACGMLSTSKAESSEEKSS.

Glu88 (proton acceptor) is an active-site residue. The Radical SAM core domain maps to 94 to 314 (EGDRATLCIS…ESHGFTCTIR (221 aa)). A disulfide bridge connects residues Cys101 and Cys325. [4Fe-4S] cluster is bound by residues Cys108, Cys112, and Cys115. S-adenosyl-L-methionine-binding positions include 153–154 (GE), Ser185, 206–208 (SLH), and His282. Cys325 serves as the catalytic S-methylcysteine intermediate.

This sequence belongs to the radical SAM superfamily. RlmN family. The cofactor is [4Fe-4S] cluster.

Its subcellular location is the cytoplasm. The enzyme catalyses adenosine(2503) in 23S rRNA + 2 reduced [2Fe-2S]-[ferredoxin] + 2 S-adenosyl-L-methionine = 2-methyladenosine(2503) in 23S rRNA + 5'-deoxyadenosine + L-methionine + 2 oxidized [2Fe-2S]-[ferredoxin] + S-adenosyl-L-homocysteine. It carries out the reaction adenosine(37) in tRNA + 2 reduced [2Fe-2S]-[ferredoxin] + 2 S-adenosyl-L-methionine = 2-methyladenosine(37) in tRNA + 5'-deoxyadenosine + L-methionine + 2 oxidized [2Fe-2S]-[ferredoxin] + S-adenosyl-L-homocysteine. Specifically methylates position 2 of adenine 2503 in 23S rRNA and position 2 of adenine 37 in tRNAs. The sequence is that of Probable dual-specificity RNA methyltransferase RlmN from Porphyromonas gingivalis (strain ATCC BAA-308 / W83).